The sequence spans 373 residues: Cobalt-precorrin-5B C(1)-methyltransferase (373 aa).

It belongs to the CbiD family.

It catalyses the reaction Co-precorrin-5B + S-adenosyl-L-methionine = Co-precorrin-6A + S-adenosyl-L-homocysteine. The protein operates within cofactor biosynthesis; adenosylcobalamin biosynthesis; cob(II)yrinate a,c-diamide from sirohydrochlorin (anaerobic route): step 6/10. Its function is as follows. Catalyzes the methylation of C-1 in cobalt-precorrin-5B to form cobalt-precorrin-6A. The polypeptide is Cobalt-precorrin-5B C(1)-methyltransferase (Listeria welshimeri serovar 6b (strain ATCC 35897 / DSM 20650 / CCUG 15529 / CIP 8149 / NCTC 11857 / SLCC 5334 / V8)).